We begin with the raw amino-acid sequence, 132 residues long: Small ribosomal subunit protein uS8 (132 aa).

This sequence belongs to the universal ribosomal protein uS8 family. As to quaternary structure, part of the 30S ribosomal subunit. Contacts proteins S5 and S12.

One of the primary rRNA binding proteins, it binds directly to 16S rRNA central domain where it helps coordinate assembly of the platform of the 30S subunit. This chain is Small ribosomal subunit protein uS8, found in Lactobacillus acidophilus (strain ATCC 700396 / NCK56 / N2 / NCFM).